The following is a 173-amino-acid chain: Bifunctional protein PyrR (173 aa).

The short motif at 93 to 105 (IILIDDVLYTGRT) is the PRPP-binding element.

Belongs to the purine/pyrimidine phosphoribosyltransferase family. PyrR subfamily. As to quaternary structure, homodimer and homohexamer; in equilibrium.

It carries out the reaction UMP + diphosphate = 5-phospho-alpha-D-ribose 1-diphosphate + uracil. Its function is as follows. Regulates transcriptional attenuation of the pyrimidine nucleotide (pyr) operon by binding in a uridine-dependent manner to specific sites on pyr mRNA. This disrupts an antiterminator hairpin in the RNA and favors formation of a downstream transcription terminator, leading to a reduced expression of downstream genes. In terms of biological role, also displays a weak uracil phosphoribosyltransferase activity which is not physiologically significant. The polypeptide is Bifunctional protein PyrR (Streptococcus agalactiae serotype Ia (strain ATCC 27591 / A909 / CDC SS700)).